The following is a 336-amino-acid chain: Ornithine carbamoyltransferase, catabolic (336 aa).

Residues 57-60 (STRT), glutamine 84, arginine 108, and 136-139 (HPTQ) contribute to the carbamoyl phosphate site. L-ornithine contacts are provided by residues asparagine 169, aspartate 233, and 237–238 (SM). Carbamoyl phosphate is bound by residues 275–276 (CL) and arginine 322.

The protein belongs to the aspartate/ornithine carbamoyltransferase superfamily. OTCase family.

It is found in the cytoplasm. It catalyses the reaction carbamoyl phosphate + L-ornithine = L-citrulline + phosphate + H(+). It participates in amino-acid degradation; L-arginine degradation via ADI pathway; carbamoyl phosphate from L-arginine: step 2/2. Reversibly catalyzes the transfer of the carbamoyl group from carbamoyl phosphate (CP) to the N(epsilon) atom of ornithine (ORN) to produce L-citrulline. This Chromobacterium violaceum (strain ATCC 12472 / DSM 30191 / JCM 1249 / CCUG 213 / NBRC 12614 / NCIMB 9131 / NCTC 9757 / MK) protein is Ornithine carbamoyltransferase, catabolic.